The chain runs to 309 residues: Mas-related G-protein coupled receptor member E (309 aa).

At 1-21 (MSLRVHTHSPSTQGDMAFNLT) the chain is on the extracellular side. Asn19 carries an N-linked (GlcNAc...) asparagine glycan. A helical transmembrane segment spans residues 22–42 (ILSLTELLSLGGLLGNGVALW). Over 43–59 (LLNQNVYRNPFSIYLLD) the chain is Cytoplasmic. The helical transmembrane segment at 60–80 (VACADLIFLCCHMVAIIPELL) threads the bilayer. Residues 81-91 (QDQLNFPEFVH) lie on the Extracellular side of the membrane. A helical membrane pass occupies residues 92 to 112 (ISLIMLRFFCYIVGLSLLVAI). Over 113–132 (STEQCLATLFPSGYLCRRPR) the chain is Cytoplasmic. Residues 133 to 153 (YLTTCVCAFIWVLCLLLDLLL) traverse the membrane as a helical segment. The Extracellular segment spans residues 154–168 (SGACTQFFGAPSYHL). Residues 169-189 (CGMLWLVVAVLLAALCCTMCV) form a helical membrane-spanning segment. Over 190–212 (TSLLLLLRVERGPERHQPRGFPT) the chain is Cytoplasmic. A helical transmembrane segment spans residues 213 to 233 (LVLLVILLFLFCGLPFGIFWL). Topologically, residues 234 to 247 (SKNLSWHTPLYFYH) are extracellular. Asn236 carries an N-linked (GlcNAc...) asparagine glycan. A helical transmembrane segment spans residues 248-268 (FSFFMASVHSAAKPAIYFFLG). Residues 269–309 (STPGQRFQEPLRLVLQRALGDEAELGAVREASQGGLVDMTV) lie on the Cytoplasmic side of the membrane.

Belongs to the G-protein coupled receptor 1 family. Mas subfamily.

It localises to the cell membrane. Functionally, orphan receptor. May regulate nociceptor function and/or development, including the sensation or modulation of pain. This Rattus norvegicus (Rat) protein is Mas-related G-protein coupled receptor member E (Mrgpre).